Reading from the N-terminus, the 313-residue chain is Transaldolase (313 aa).

The active-site Schiff-base intermediate with substrate is lysine 125.

The protein belongs to the transaldolase family. Type 1 subfamily. As to quaternary structure, homodimer.

It localises to the cytoplasm. The catalysed reaction is D-sedoheptulose 7-phosphate + D-glyceraldehyde 3-phosphate = D-erythrose 4-phosphate + beta-D-fructose 6-phosphate. Its pathway is carbohydrate degradation; pentose phosphate pathway; D-glyceraldehyde 3-phosphate and beta-D-fructose 6-phosphate from D-ribose 5-phosphate and D-xylulose 5-phosphate (non-oxidative stage): step 2/3. Transaldolase is important for the balance of metabolites in the pentose-phosphate pathway. The polypeptide is Transaldolase (Pseudomonas syringae pv. syringae (strain B728a)).